A 333-amino-acid polypeptide reads, in one-letter code: Holliday junction branch migration complex subunit RuvB (333 aa).

Residues 1–173 (MTAPENLDAA…FGIIEHLEYY (173 aa)) form a large ATPase domain (RuvB-L) region. ATP-binding positions include leucine 11, arginine 12, glycine 53, lysine 56, threonine 57, threonine 58, 120 to 122 (EDF), arginine 163, tyrosine 173, and arginine 210. Threonine 57 is a Mg(2+) binding site. Positions 174–244 (TAEEIATNLL…RAQSALDKLG (71 aa)) are small ATPAse domain (RuvB-S). The segment at 247 to 333 (SAGLDDRDKK…IDDGNGIFLN (87 aa)) is head domain (RuvB-H). Positions 302 and 307 each coordinate DNA.

Belongs to the RuvB family. Homohexamer. Forms an RuvA(8)-RuvB(12)-Holliday junction (HJ) complex. HJ DNA is sandwiched between 2 RuvA tetramers; dsDNA enters through RuvA and exits via RuvB. An RuvB hexamer assembles on each DNA strand where it exits the tetramer. Each RuvB hexamer is contacted by two RuvA subunits (via domain III) on 2 adjacent RuvB subunits; this complex drives branch migration. In the full resolvosome a probable DNA-RuvA(4)-RuvB(12)-RuvC(2) complex forms which resolves the HJ.

It is found in the cytoplasm. It catalyses the reaction ATP + H2O = ADP + phosphate + H(+). The RuvA-RuvB-RuvC complex processes Holliday junction (HJ) DNA during genetic recombination and DNA repair, while the RuvA-RuvB complex plays an important role in the rescue of blocked DNA replication forks via replication fork reversal (RFR). RuvA specifically binds to HJ cruciform DNA, conferring on it an open structure. The RuvB hexamer acts as an ATP-dependent pump, pulling dsDNA into and through the RuvAB complex. RuvB forms 2 homohexamers on either side of HJ DNA bound by 1 or 2 RuvA tetramers; 4 subunits per hexamer contact DNA at a time. Coordinated motions by a converter formed by DNA-disengaged RuvB subunits stimulates ATP hydrolysis and nucleotide exchange. Immobilization of the converter enables RuvB to convert the ATP-contained energy into a lever motion, pulling 2 nucleotides of DNA out of the RuvA tetramer per ATP hydrolyzed, thus driving DNA branch migration. The RuvB motors rotate together with the DNA substrate, which together with the progressing nucleotide cycle form the mechanistic basis for DNA recombination by continuous HJ branch migration. Branch migration allows RuvC to scan DNA until it finds its consensus sequence, where it cleaves and resolves cruciform DNA. In Deinococcus radiodurans (strain ATCC 13939 / DSM 20539 / JCM 16871 / CCUG 27074 / LMG 4051 / NBRC 15346 / NCIMB 9279 / VKM B-1422 / R1), this protein is Holliday junction branch migration complex subunit RuvB.